Reading from the N-terminus, the 1178-residue chain is Phytochrome B (1178 aa).

A compositionally biased stretch (polar residues) spans 1 to 15; that stretch reads MASGSRATPTRSPSS. Residues 1–58 form a disordered region; sequence MASGSRATPTRSPSSARPEAPRHAHHHHHHHSQSSGGSTSRAGGGGGGGGGGGGTAAT. Basic residues predominate over residues 23-32; it reads HAHHHHHHHS. A compositionally biased stretch (gly residues) spans 42–55; the sequence is AGGGGGGGGGGGGT. In terms of domain architecture, GAF spans 267–449; that stretch reads DIKLLCDTVV…AFGLQLNMEL (183 aa). Cys372 provides a ligand contact to phytochromobilin. 2 PAS domains span residues 668 to 739 and 802 to 873; these read VARE…LRGE and DYKA…MVVI. The Histidine kinase domain maps to 950–1170; the sequence is YICQEIKNPL…LIVLELPQPR (221 aa).

It belongs to the phytochrome family. As to quaternary structure, homodimer. Contains one covalently linked phytochromobilin chromophore.

In terms of biological role, regulatory photoreceptor which exists in two forms that are reversibly interconvertible by light: the Pr form that absorbs maximally in the red region of the spectrum and the Pfr form that absorbs maximally in the far-red region. Photoconversion of Pr to Pfr induces an array of morphogenic responses, whereas reconversion of Pfr to Pr cancels the induction of those responses. Pfr controls the expression of a number of nuclear genes including those encoding the small subunit of ribulose-bisphosphate carboxylase, chlorophyll A/B binding protein, protochlorophyllide reductase, rRNA, etc. It also controls the expression of its own gene(s) in a negative feedback fashion. This chain is Phytochrome B (PHYB), found in Sorghum bicolor (Sorghum).